The primary structure comprises 248 residues: MAADPIHQFQITKLFSLGHIGGQEIAFTNSSAYMFAAVAIIAVMMLAPGRQLVPGRFQSVAELSYEFVANMIRSTAGKEGLKFFPLVFSLFMFIAVSNLVGIIPYTFTVSSHLIVTVTLAMLVFVTVLVYGLAKNGLKFFKLFVPSGVPIYILPLVVFIEVISFFLKPVSHSVRLFANMLAGHIALKVFASFIAMLGALGVVGWVGAVLPLGLTIALTALELLVAFLQAYVFAILTCIYLNDAIHPGH.

6 consecutive transmembrane segments (helical) span residues isoleucine 25 to methionine 45, phenylalanine 83 to isoleucine 103, leucine 113 to alanine 133, leucine 142 to isoleucine 162, phenylalanine 192 to glycine 212, and isoleucine 215 to leucine 235.

This sequence belongs to the ATPase A chain family. In terms of assembly, F-type ATPases have 2 components, CF(1) - the catalytic core - and CF(0) - the membrane proton channel. CF(1) has five subunits: alpha(3), beta(3), gamma(1), delta(1), epsilon(1). CF(0) has four main subunits: a, b, b' and c.

It is found in the cell inner membrane. Functionally, key component of the proton channel; it plays a direct role in the translocation of protons across the membrane. This Rhodopseudomonas palustris (strain HaA2) protein is ATP synthase subunit a.